The primary structure comprises 272 residues: S-adenosylmethionine decarboxylase proenzyme (272 aa).

The active-site Schiff-base intermediate with substrate; via pyruvic acid is the S122. The residue at position 122 (S122) is a Pyruvic acid (Ser); by autocatalysis. H127 (proton acceptor; for processing activity) is an active-site residue. C150 (proton donor; for catalytic activity) is an active-site residue.

The protein belongs to the prokaryotic AdoMetDC family. Type 2 subfamily. Heterooctamer of four alpha and four beta chains arranged as a tetramer of alpha/beta heterodimers. Pyruvate is required as a cofactor. In terms of processing, is synthesized initially as an inactive proenzyme. Formation of the active enzyme involves a self-maturation process in which the active site pyruvoyl group is generated from an internal serine residue via an autocatalytic post-translational modification. Two non-identical subunits are generated from the proenzyme in this reaction, and the pyruvate is formed at the N-terminus of the alpha chain, which is derived from the carboxyl end of the proenzyme. The post-translation cleavage follows an unusual pathway, termed non-hydrolytic serinolysis, in which the side chain hydroxyl group of the serine supplies its oxygen atom to form the C-terminus of the beta chain, while the remainder of the serine residue undergoes an oxidative deamination to produce ammonia and the pyruvoyl group blocking the N-terminus of the alpha chain.

It catalyses the reaction S-adenosyl-L-methionine + H(+) = S-adenosyl 3-(methylsulfanyl)propylamine + CO2. The protein operates within amine and polyamine biosynthesis; S-adenosylmethioninamine biosynthesis; S-adenosylmethioninamine from S-adenosyl-L-methionine: step 1/1. In terms of biological role, catalyzes the decarboxylation of S-adenosylmethionine to S-adenosylmethioninamine (dcAdoMet), the propylamine donor required for the synthesis of the polyamines spermine and spermidine from the diamine putrescine. This chain is S-adenosylmethionine decarboxylase proenzyme, found in Clostridium botulinum (strain Eklund 17B / Type B).